Reading from the N-terminus, the 371-residue chain is Mannonate dehydratase (371 aa).

The protein belongs to the mannonate dehydratase family. It depends on Fe(2+) as a cofactor. The cofactor is Mn(2+).

The enzyme catalyses D-mannonate = 2-dehydro-3-deoxy-D-gluconate + H2O. It participates in carbohydrate metabolism; pentose and glucuronate interconversion. Functionally, catalyzes the dehydration of D-mannonate. The polypeptide is Mannonate dehydratase (Geobacillus thermodenitrificans (strain NG80-2)).